The primary structure comprises 306 residues: MSTLGNQYDNSLVSNAFGFLRLPMNFQPYDSDADWVITGVPFDMATSGRAGGRHGPAAIRQVSTNLAWEHNRFPWNFDMRERLNVVDCGDLVYAFGDAREMSEKLQAHAEKLLAAGKRMLSFGGDHFVTLPLLRAHAKHFGKMALVHFDAHTDTYANGCEFDHGTMFYTAPKEGLIDPNHSVQIGIRTEFDKDNGFTVLDACQVNDRSVDDVIAQVKQIVGDMPVYLTFDIDCLDPAFAPGTGTPVIGGLTSDRAIKLVRGLKDLNIVGMDVVEVAPAYDQSEITALAAATLALEMLYIQAAKKGE.

The Mn(2+) site is built by His126, Asp149, His151, Asp153, Asp230, and Asp232.

It belongs to the arginase family. Agmatinase subfamily. It depends on Mn(2+) as a cofactor.

It catalyses the reaction agmatine + H2O = urea + putrescine. It participates in amine and polyamine biosynthesis; putrescine biosynthesis via agmatine pathway; putrescine from agmatine: step 1/1. In terms of biological role, catalyzes the formation of putrescine from agmatine. The sequence is that of Agmatinase from Shigella boydii serotype 18 (strain CDC 3083-94 / BS512).